An 831-amino-acid polypeptide reads, in one-letter code: uncharacterized protein (831 aa).

Residue H787 is the Tele-phosphohistidine intermediate of the active site.

This sequence belongs to the PEP-utilizing enzyme family.

This is an uncharacterized protein from Bacillus subtilis (strain 168).